The sequence spans 167 residues: uncharacterized protein (167 aa).

This is an uncharacterized protein from Mycobacterium tuberculosis (strain CDC 1551 / Oshkosh).